Reading from the N-terminus, the 178-residue chain is Protein GrpE (178 aa).

Belongs to the GrpE family. Homodimer.

The protein localises to the cytoplasm. In terms of biological role, participates actively in the response to hyperosmotic and heat shock by preventing the aggregation of stress-denatured proteins, in association with DnaK and GrpE. It is the nucleotide exchange factor for DnaK and may function as a thermosensor. Unfolded proteins bind initially to DnaJ; upon interaction with the DnaJ-bound protein, DnaK hydrolyzes its bound ATP, resulting in the formation of a stable complex. GrpE releases ADP from DnaK; ATP binding to DnaK triggers the release of the substrate protein, thus completing the reaction cycle. Several rounds of ATP-dependent interactions between DnaJ, DnaK and GrpE are required for fully efficient folding. This is Protein GrpE from Rickettsia africae (strain ESF-5).